Reading from the N-terminus, the 351-residue chain is Protein RecA (351 aa).

64 to 71 (GPESSGKT) is a binding site for ATP. Residues 330-351 (DRFLQNGGPDPDDGDGDATAEM) form a disordered region. A compositionally biased stretch (acidic residues) spans 339-351 (DPDDGDGDATAEM).

It belongs to the RecA family.

Its subcellular location is the cytoplasm. Can catalyze the hydrolysis of ATP in the presence of single-stranded DNA, the ATP-dependent uptake of single-stranded DNA by duplex DNA, and the ATP-dependent hybridization of homologous single-stranded DNAs. It interacts with LexA causing its activation and leading to its autocatalytic cleavage. This is Protein RecA from Rhizobium leguminosarum bv. viciae.